The primary structure comprises 638 residues: Ubiquilin-2 (638 aa).

A compositionally biased stretch (low complexity) spans 1–26; the sequence is MAENGESSGPPRPSRGPAAAPGAASP. 2 disordered regions span residues 1-31 and 107-158; these read MAENGESSGPPRPSRGPAAAPGAASPPAEPK and RPQG…SSFG. An N-acetylalanine modification is found at Ala2. Phosphoserine is present on Ser25. Residues 33–107 form the Ubiquitin-like domain; that stretch reads IKVTVKTPKE…VHLVIKSQNR (75 aa). Residues 112–158 show a composition bias toward low complexity; sequence ATTQPSTTAGTSTTTTTTTTAAAPAATTSSAPRSSSTPTTTNSSSFG. 2 STI1 domains span residues 189-217 and 219-258; these read SPEMMIQIMENPFVQSMLSNPDLMRQLIM and NPQMQQLIQRNPEISHLLNNPDIMRQTLEIARNPAMMQEM. The disordered stretch occupies residues 298-364; that stretch reads FGGNPFATVG…SGSSSSSTTA (67 aa). Residues 305 to 316 are compositionally biased toward low complexity; sequence TVGSSSTSGEGT. A compositionally biased stretch (pro residues) spans 327–336; it reads LPNPWAPPPT. The segment covering 337–364 has biased composition (low complexity); that stretch reads TQTAATTTTTTTTSSGSGSGSSSSSTTA. STI1 domains lie at 393–440 and 444–476; these read NPQL…QEQM and LPNFLQQMQNPETIAAMSNPRAMQALMQIQQGL. 11 consecutive repeat copies span residues 505–507, 508–510, 511–513, 514–516, 517–519, 520–522, 523–525, 526–528, 529–531, 532–533, and 535–537. The segment at 505-537 is 11 X 3 AA tandem repeats P-X-X; the sequence is PVGPVTPIGPIGPIVPFTPIGPIGPIGPTGPAS. Positions 528 to 570 are disordered; the sequence is GPIGPTGPASSPGSTGTGIPPATTVSSSAPTETISPTSESGPN. Low complexity predominate over residues 533 to 551; it reads TGPASSPGSTGTGIPPATT. Residues 552-570 show a composition bias toward polar residues; it reads VSSSAPTETISPTSESGPN. The region spanning 589–635 is the UBA domain; it reads PPNPEVRFQQQLEQLNAMGFLNREANLQALIATGGDINAAIERLLGS.

As to quaternary structure, homodimer. Forms heterodimer with UBQLN1. Binds UBE3A and BTRC. Interacts with the 19S proteasome subunit. Interacts with C9orf72. Binds CD47. Interacts with HNRNPA1 and HNRNPU. Found in a complex with UBQLN1 and MAP1LC3A/B/C. Interacts with EPS15, EPN1 and EPN2. Interacts with HERPUD1. Interacts with RAD23A. Interacts with TARDBP. Interacts (via C-terminus) with FAF2 (via N-terminus). Interacts with UBQLN4. In terms of processing, degraded during macroautophagy. In terms of tissue distribution, highly expressed in smooth muscle. Expression in other tissues is very low.

The protein localises to the cytoplasm. The protein resides in the nucleus. It is found in the membrane. It localises to the cytoplasmic vesicle. Its subcellular location is the autophagosome. In terms of biological role, plays an important role in the regulation of different protein degradation mechanisms and pathways including ubiquitin-proteasome system (UPS), autophagy and the endoplasmic reticulum-associated protein degradation (ERAD) pathway. Mediates the proteasomal targeting of misfolded or accumulated proteins for degradation by binding (via UBA domain) to their polyubiquitin chains and by interacting (via ubiquitin-like domain) with the subunits of the proteasome. Plays a role in the ERAD pathway via its interaction with ER-localized proteins FAF2/UBXD8 and HERPUD1 and may form a link between the polyubiquitinated ERAD substrates and the proteasome. Involved in the regulation of macroautophagy and autophagosome formation; required for maturation of autophagy-related protein LC3 from the cytosolic form LC3-I to the membrane-bound form LC3-II and may assist in the maturation of autophagosomes to autolysosomes by mediating autophagosome-lysosome fusion. Negatively regulates the endocytosis of GPCR receptors: AVPR2 and ADRB2, by specifically reducing the rate at which receptor-arrestin complexes concentrate in clathrin-coated pits (CCPs). Links CD47 to vimentin-containing intermediate filaments of the cytoskeleton. This Mus musculus (Mouse) protein is Ubiquilin-2 (Ubqln2).